The chain runs to 294 residues: Proline iminopeptidase (294 aa).

In terms of domain architecture, AB hydrolase-1 spans 28–278 (PLLLLHGGPG…GCGHMPFVQE (251 aa)). Residue serine 106 is the Nucleophile of the active site. Aspartate 245 is a catalytic residue. The Proton donor role is filled by histidine 272.

The protein belongs to the peptidase S33 family. As to quaternary structure, homotrimer.

The protein resides in the cell envelope. The catalysed reaction is Release of N-terminal proline from a peptide.. Its activity is regulated as follows. Inhibited by 3,4-DCI, but no significant effect on enzyme activity by pepstatin A, E-64, 1,10-phenanthroline or EDTA. Its function is as follows. Releases the N-terminal proline from various substrates. Cleaves Pro-betaNA (L-prolyl-beta-naphthylamide) effectively. The sequence is that of Proline iminopeptidase (pip) from Lactobacillus delbrueckii subsp. lactis.